A 405-amino-acid polypeptide reads, in one-letter code: Argininosuccinate synthase (405 aa).

ATP-binding positions include 10–18 (AYSGGLDTS) and Ala37. The L-citrulline site is built by Tyr88 and Ser93. An ATP-binding site is contributed by Gly118. Positions 120, 124, and 125 each coordinate L-aspartate. Asn124 provides a ligand contact to L-citrulline. Positions 128, 179, 188, 264, and 276 each coordinate L-citrulline.

Belongs to the argininosuccinate synthase family. Type 1 subfamily. In terms of assembly, homotetramer.

The protein localises to the cytoplasm. It carries out the reaction L-citrulline + L-aspartate + ATP = 2-(N(omega)-L-arginino)succinate + AMP + diphosphate + H(+). Its pathway is amino-acid biosynthesis; L-arginine biosynthesis; L-arginine from L-ornithine and carbamoyl phosphate: step 2/3. This Nitrosococcus oceani (strain ATCC 19707 / BCRC 17464 / JCM 30415 / NCIMB 11848 / C-107) protein is Argininosuccinate synthase.